A 502-amino-acid chain; its full sequence is MHNGFDALQLHANRLRGVTIPDLLAAELKRPEQYARQVGPLYFNFARQKYDCVALEALFALARNHNVTGAFQRMFCGEQVNVTEGRAVLHTALRGDLSGTSVAVAAYTAAAKVRERMYALIAGLDASEVTDIVSVGIGGSDLGPRLVVDALRPISQGRFRVHFVSNVDGAAMRRTLDMLDPSRTAGILISKTFGTQETLLNGRILYDWLGGSERLYAVSANPERAVHAFDIVPTQVLPIWDWVGGRYSLWSAVGFPIALAIGSQRFEELLAGAAEFDAYALRVPLEENVAVLHGLTAVWNRNFLGCATYAVMAYDQRLALLPAYLQQLVMESLGKRVKCDGTPVDRDTVPVWWGGVGTDVQHSFFQALHQGTNIVPADFIGTIRNDDLYTENHFALNANLLAQIEVLANGQLSDDPHRVYPGGNPSTLILLDALTPQALGGLIAMYEHSVYVQSVIWGINAFDQFGVELGKHLAVQLLPALKGESVEVVDPVTRAVLVRLRG.

Residue Glu331 is the Proton donor of the active site. Residues His362 and Lys471 contribute to the active site.

This sequence belongs to the GPI family.

It localises to the cytoplasm. It catalyses the reaction alpha-D-glucose 6-phosphate = beta-D-fructose 6-phosphate. The protein operates within carbohydrate biosynthesis; gluconeogenesis. It participates in carbohydrate degradation; glycolysis; D-glyceraldehyde 3-phosphate and glycerone phosphate from D-glucose: step 2/4. Functionally, catalyzes the reversible isomerization of glucose-6-phosphate to fructose-6-phosphate. The chain is Glucose-6-phosphate isomerase from Xylella fastidiosa (strain M12).